Consider the following 377-residue polypeptide: MREKVVSLAQDLIRRPSISPNDEGCQQIIAERLEKLGFQIEWMPFNDTLNLWAKHGTSEPVIAFAGHTDVVPTGDENQWSSPPFSAEIIDGMLYGRGAADMKGSLAAMIVAAEEYVKANPNHKGTIALLITSDEEAAAKDGTIRVVETLMARDEKITYCMVGEPSSAKNLGDVVKNGRRGSITGNLYIKGIQGHVAYPHLAENPIHKAAPFLQELTTYQWDKGNEFFPPTSLQIANIHAGTGSNNVIPAELYIQFNLRYCTEVTDEIIKQKVAEMLEKHNLKYRIEWNLSGKPFLTKPGKLLDSITSAIEETIGITPKAETGGGTSDGRFIALMGAEVVEFGPLNSTIHKVNECVSIEDLGKCGEIYHKMLVNLLDS.

Histidine 67 lines the Zn(2+) pocket. Aspartate 69 is an active-site residue. Aspartate 100 contributes to the Zn(2+) binding site. The Proton acceptor role is filled by glutamate 134. Zn(2+)-binding residues include glutamate 135, glutamate 163, and histidine 349.

This sequence belongs to the peptidase M20A family. DapE subfamily. As to quaternary structure, homodimer. It depends on Zn(2+) as a cofactor. Co(2+) serves as cofactor.

It catalyses the reaction N-succinyl-(2S,6S)-2,6-diaminopimelate + H2O = (2S,6S)-2,6-diaminopimelate + succinate. The protein operates within amino-acid biosynthesis; L-lysine biosynthesis via DAP pathway; LL-2,6-diaminopimelate from (S)-tetrahydrodipicolinate (succinylase route): step 3/3. Functionally, catalyzes the hydrolysis of N-succinyl-L,L-diaminopimelic acid (SDAP), forming succinate and LL-2,6-diaminopimelate (DAP), an intermediate involved in the bacterial biosynthesis of lysine and meso-diaminopimelic acid, an essential component of bacterial cell walls. The protein is Succinyl-diaminopimelate desuccinylase of Haemophilus influenzae (strain 86-028NP).